Reading from the N-terminus, the 130-residue chain is Small ribosomal subunit protein uS9 (130 aa).

The disordered stretch occupies residues L98–R130. Residues K111 to R130 are compositionally biased toward basic residues.

Belongs to the universal ribosomal protein uS9 family.

The chain is Small ribosomal subunit protein uS9 (rpsI) from Staphylococcus carnosus (strain TM300).